Here is a 341-residue protein sequence, read N- to C-terminus: DnaJ homolog subfamily C member 22 (341 aa).

In terms of domain architecture, TM2 spans 4 to 50 (GLLMTYALWAFGGPVGLHHLYLGRDSHALLWMLTLGGGGLGWLWEFW). 7 helical membrane-spanning segments follow: residues 5 to 25 (LLMTYALWAFGGPVGLHHLYL), 30 to 50 (HALLWMLTLGGGGLGWLWEFW), 81 to 101 (FASQMVVGVYFGLVALISLSS), 105 to 125 (FYIVGLPLAVGLGVLLVAAVG), 135 to 155 (LGAAFLTSPVFYGRPIAILPI), 185 to 205 (VGLAYLAFTGPLAYSTLYNTA), and 232 to 252 (VESVLLLPCRIWWLLVGAPGF). A J domain is found at 277–341 (LAHQVLGIPE…QPKKPRASWR (65 aa)).

It localises to the membrane. Its function is as follows. May function as a co-chaperone. In Rattus norvegicus (Rat), this protein is DnaJ homolog subfamily C member 22 (Dnajc22).